Here is a 178-residue protein sequence, read N- to C-terminus: Nicotinamide-nucleotide adenylyltransferase (178 aa).

It belongs to the archaeal NMN adenylyltransferase family.

The protein localises to the cytoplasm. It catalyses the reaction beta-nicotinamide D-ribonucleotide + ATP + H(+) = diphosphate + NAD(+). It participates in cofactor biosynthesis; NAD(+) biosynthesis; NAD(+) from nicotinamide D-ribonucleotide: step 1/1. The protein is Nicotinamide-nucleotide adenylyltransferase of Pyrobaculum aerophilum (strain ATCC 51768 / DSM 7523 / JCM 9630 / CIP 104966 / NBRC 100827 / IM2).